A 255-amino-acid polypeptide reads, in one-letter code: Tumor necrosis factor receptor superfamily member 9 (255 aa).

The first 23 residues, 1-23 (MGNSCYNIVATLLLVLNFERTRS), serve as a signal peptide directing secretion. TNFR-Cys repeat units follow at residues 24–45 (LQDP…NQIC), 47–86 (PCPP…NAEC), 87–118 (DCTP…KGCK), and 119–159 (DCCF…VVCG). Topologically, residues 24–186 (LQDPCSNCPA…PAREPGHSPQ (163 aa)) are extracellular. 9 disulfides stabilise this stretch: Cys28–Cys37, Cys31–Cys45, Cys48–Cys62, Cys65–Cys78, Cys68–Cys86, Cys88–Cys94, Cys99–Cys106, Cys102–Cys117, and Cys121–Cys133. Residues Asn138 and Asn149 are each glycosylated (N-linked (GlcNAc...) asparagine). A disulfide bridge connects residues Cys139 and Cys158. Positions 161-180 (SPADLSPGASSVTPPAPARE) are disordered. Residues 187-213 (IISFFLALTSTALLFLLFFLTLRFSVV) traverse the membrane as a helical segment. Residues 214–255 (KRGRKKLLYIFKQPFMRPVQTTQEEDGCSCRFPEEEEGGCEL) are Cytoplasmic-facing. The interaction with LRR-1 stretch occupies residues 214-255 (KRGRKKLLYIFKQPFMRPVQTTQEEDGCSCRFPEEEEGGCEL).

As to quaternary structure, predominantly homodimeric, but may also exist as a monomer. Interacts with TRAF1, TRAF2 and TRAF3. Interacts with LRR-repeat protein 1/LRR-1. Expressed on the surface of activated T-cells.

The protein resides in the cell membrane. Its function is as follows. Receptor for TNFSF9/4-1BBL. Conveys a signal that enhances CD8(+) T-cell survival, cytotoxicity, and mitochondrial activity, thereby promoting immunity against viruses and tumors. The polypeptide is Tumor necrosis factor receptor superfamily member 9 (TNFRSF9) (Homo sapiens (Human)).